A 536-amino-acid polypeptide reads, in one-letter code: CTP synthase (536 aa).

An amidoligase domain region spans residues 1–266; that stretch reads MKTKFIFVTG…DEQVVEKLNI (266 aa). Serine 14 contacts CTP. Serine 14 contributes to the UTP binding site. ATP-binding positions include 15 to 20 and aspartate 72; that span reads SIGKGL. Positions 72 and 140 each coordinate Mg(2+). CTP-binding positions include 147–149, 187–192, and lysine 223; these read DIE and KTKPTQ. UTP is bound by residues 187–192 and lysine 223; that span reads KTKPTQ. The Glutamine amidotransferase type-1 domain occupies 292 to 534; the sequence is RIAIVGKYVN…IAAALDRKDK (243 aa). Residue glycine 354 participates in L-glutamine binding. Cysteine 381 serves as the catalytic Nucleophile; for glutamine hydrolysis. Residues 382–385, glutamate 405, and arginine 462 each bind L-glutamine; that span reads LGMQ. Active-site residues include histidine 507 and glutamate 509.

The protein belongs to the CTP synthase family. As to quaternary structure, homotetramer.

The catalysed reaction is UTP + L-glutamine + ATP + H2O = CTP + L-glutamate + ADP + phosphate + 2 H(+). It carries out the reaction L-glutamine + H2O = L-glutamate + NH4(+). It catalyses the reaction UTP + NH4(+) + ATP = CTP + ADP + phosphate + 2 H(+). Its pathway is pyrimidine metabolism; CTP biosynthesis via de novo pathway; CTP from UDP: step 2/2. With respect to regulation, allosterically activated by GTP, when glutamine is the substrate; GTP has no effect on the reaction when ammonia is the substrate. The allosteric effector GTP functions by stabilizing the protein conformation that binds the tetrahedral intermediate(s) formed during glutamine hydrolysis. Inhibited by the product CTP, via allosteric rather than competitive inhibition. In terms of biological role, catalyzes the ATP-dependent amination of UTP to CTP with either L-glutamine or ammonia as the source of nitrogen. Regulates intracellular CTP levels through interactions with the four ribonucleotide triphosphates. The protein is CTP synthase of Geobacter sulfurreducens (strain ATCC 51573 / DSM 12127 / PCA).